Consider the following 1232-residue polypeptide: DNA-directed RNA polymerase subunit beta (1232 aa).

The disordered stretch occupies residues Ser1170–His1232. Positions Val1171–Val1180 are enriched in acidic residues. The segment covering Pro1189–Glu1198 has biased composition (basic and acidic residues). Residues Asp1199–His1232 show a composition bias toward acidic residues.

Belongs to the RNA polymerase beta chain family. As to quaternary structure, the RNAP catalytic core consists of 2 alpha, 1 beta, 1 beta' and 1 omega subunit. When a sigma factor is associated with the core the holoenzyme is formed, which can initiate transcription.

It carries out the reaction RNA(n) + a ribonucleoside 5'-triphosphate = RNA(n+1) + diphosphate. In terms of biological role, DNA-dependent RNA polymerase catalyzes the transcription of DNA into RNA using the four ribonucleoside triphosphates as substrates. The protein is DNA-directed RNA polymerase subunit beta of Clostridium botulinum (strain Okra / Type B1).